Consider the following 323-residue polypeptide: Small ribosomal subunit protein uS9m (323 aa).

The segment at 298–323 (TRDARKVERKKPGKVKARKSPTWVKR) is disordered. The segment covering 304-323 (VERKKPGKVKARKSPTWVKR) has biased composition (basic residues).

This sequence belongs to the universal ribosomal protein uS9 family.

Its subcellular location is the mitochondrion. In Debaryomyces hansenii (strain ATCC 36239 / CBS 767 / BCRC 21394 / JCM 1990 / NBRC 0083 / IGC 2968) (Yeast), this protein is Small ribosomal subunit protein uS9m (MRPS9).